Consider the following 479-residue polypeptide: Polyadenylate-binding protein-interacting protein 1 (479 aa).

A disordered region spans residues 1–114 (MSDGFDRAPG…PQQNSESAMA (114 aa)). Serine 2 is modified (N-acetylalanine). Positions 11–33 (AGRGRSRGLGRGGGGPEGGGFPN) are enriched in gly residues. Position 21 is an omega-N-methylarginine (arginine 21). Positions 45–69 (PPQPKAPGFLQPPPLRQPRTTPPPG) are enriched in pro residues. Residues 98–111 (PSSQDKIPQQNSES) show a composition bias toward polar residues. The PABPC1-interacting motif-2 (PAM2) stretch occupies residues 116-143 (PQVVVAPVLMSKLSVNAPEFYPSGYSSS). Residues 157-375 (TLSEYVQDFL…LLKLVELRSS (219 aa)) are PAIP1 middle domain (PAIP1M). The MIF4G domain occupies 159-376 (SEYVQDFLNH…LKLVELRSSN (218 aa)). The disordered stretch occupies residues 435-455 (DYEENGTDLSGAGDPYLDDID). The segment at 440–479 (GTDLSGAGDPYLDDIDDEMDPEIEEAYEKFCLESERKRKQ) is PABPC1-interacting motif-1 (PAM1).

Interacts with the RRM1-RRM2 and C-terminus regions of PABPC1 in a 1:1 stoichiometry. Interacts with EIF4A. As to quaternary structure, (Microbial infection) Interacts (via PAIP1M) with human SARS coronaviruses SARS-COV and SARS-COV-2 NSP3 protein (via SARS-unique domain); the interaction increases binding affinity with PABPC1.

It is found in the cytoplasm. Functionally, acts as a coactivator in the regulation of translation initiation of poly(A)-containing mRNAs. Its stimulatory activity on translation is mediated via its action on PABPC1. Competes with PAIP2 for binding to PABPC1. Its association with EIF4A and PABPC1 may potentiate contacts between mRNA termini. May also be involved in translationally coupled mRNA turnover. Implicated with other RNA-binding proteins in the cytoplasmic deadenylation/translational and decay interplay of the FOS mRNA mediated by the major coding-region determinant of instability (mCRD) domain. Its function is as follows. (Microbial infection) Upon interaction with SARS coronavirus SARS-CoV NSP3 protein, plays an important role in viral protein synthesis. The polypeptide is Polyadenylate-binding protein-interacting protein 1 (Homo sapiens (Human)).